The following is a 421-amino-acid chain: 4-hydroxy-3-methylbut-2-en-1-yl diphosphate synthase (flavodoxin) (421 aa).

[4Fe-4S] cluster contacts are provided by Cys298, Cys301, Cys344, and Glu351.

It belongs to the IspG family. [4Fe-4S] cluster is required as a cofactor.

It carries out the reaction (2E)-4-hydroxy-3-methylbut-2-enyl diphosphate + oxidized [flavodoxin] + H2O + 2 H(+) = 2-C-methyl-D-erythritol 2,4-cyclic diphosphate + reduced [flavodoxin]. The protein operates within isoprenoid biosynthesis; isopentenyl diphosphate biosynthesis via DXP pathway; isopentenyl diphosphate from 1-deoxy-D-xylulose 5-phosphate: step 5/6. Converts 2C-methyl-D-erythritol 2,4-cyclodiphosphate (ME-2,4cPP) into 1-hydroxy-2-methyl-2-(E)-butenyl 4-diphosphate. In Neisseria meningitidis serogroup C / serotype 2a (strain ATCC 700532 / DSM 15464 / FAM18), this protein is 4-hydroxy-3-methylbut-2-en-1-yl diphosphate synthase (flavodoxin).